A 713-amino-acid polypeptide reads, in one-letter code: Calpastatin (713 aa).

Residues 1–21 (MSRPGPKPAASSRPRRGAAAS) are compositionally biased toward low complexity. The tract at residues 1–152 (MSRPGPKPAA…SADGESVAGG (152 aa)) is disordered. Over residues 47–64 (VTASSAATGTSPRMSTTG) the composition is skewed to polar residues. S57 bears the Phosphoserine mark. K69 participates in a covalent cross-link: Glycyl lysine isopeptide (Lys-Gly) (interchain with G-Cter in SUMO2). Position 86 is an N6-acetyllysine (K86). Residues 120 to 129 (SRSNEQIVSE) are compositionally biased toward polar residues. A phosphoserine mark is found at S122 and S171. T173 carries the post-translational modification Phosphothreonine. Residues 208–260 (TNKDDPPYTGPVVLDPMDSTYLEALGIKEGTIPPEYRKLLEKNEAITGPLPDS) form an Inhibitory domain 1 repeat. The disordered stretch occupies residues 253–402 (ITGPLPDSPK…PEETSKCLSE (150 aa)). S260 and S281 each carry phosphoserine. Polar residues-rich tracts occupy residues 275 to 285 (SDFTCSSPTGK), 294 to 304 (GESSKAQSAGV), and 326 to 346 (QALQALSDSLGTRQPDPQSHL). One copy of the Inhibitory domain 2 repeat lies at 341 to 393 (DPQSHLRQAKQVKEAKAKEERQEKCGEDEDTVPAEYRLKPAKDKDGKPLLPEP). 2 stretches are compositionally biased toward basic and acidic residues: residues 351–365 (QVKEAKAKEERQEKC) and 376–387 (YRLKPAKDKDGK). A phosphoserine mark is found at S401, S403, S410, and S445. The interval 442-507 (LARSLGTRKE…PLLPKEAEEQ (66 aa)) is disordered. The segment covering 448–505 (TRKEDPEDEKSLVDKVKEKAKEEDHEKLGEKEETIPPDYRLEIVKDKDGKPLLPKEAE) has biased composition (basic and acidic residues). An Inhibitory domain 3 repeat occupies 451–504 (EDPEDEKSLVDKVKEKAKEEDHEKLGEKEETIPPDYRLEIVKDKDGKPLLPKEA). A phosphoserine mark is found at S521 and S532. Residues 544 to 558 (VSETVSQVPAPSNHT) are compositionally biased toward polar residues. A disordered region spans residues 544–713 (VSETVSQVPA…PKPKVDEDAT (170 aa)). A phosphoserine mark is found at S580 and S582. An Inhibitory domain 4 repeat occupies 588 to 641 (PDPDENKPLDDKVKEKIKAEHSEKLGERDDTIPPEYRHLLDNDGKDKPEKPLTK). Composition is skewed to basic and acidic residues over residues 588-648 (PDPD…KLGQ) and 687-713 (SKNEEKTKDSSKKTEEVPKPKVDEDAT).

Belongs to the protease inhibitor I27 (calpastatin) family.

Specific inhibition of calpain (calcium-dependent cysteine protease). Plays a key role in postmortem tenderization of meat and have been proposed to be involved in muscle protein degradation in living tissue. This is Calpastatin (Cast) from Rattus norvegicus (Rat).